Here is a 552-residue protein sequence, read N- to C-terminus: Urocanate hydratase (552 aa).

NAD(+) is bound by residues 49-50 (GG), Gln-127, 173-175 (GMG), Glu-193, Arg-198, 239-240 (NA), 260-264 (QTSAH), 270-271 (YV), and Tyr-319. Residue Cys-407 is part of the active site. Residue Gly-489 participates in NAD(+) binding.

The protein belongs to the urocanase family. Composed of at least two subunits. The cofactor is NAD(+).

The protein localises to the cytoplasm. It catalyses the reaction 4-imidazolone-5-propanoate = trans-urocanate + H2O. It participates in amino-acid degradation; L-histidine degradation into L-glutamate; N-formimidoyl-L-glutamate from L-histidine: step 2/3. Its function is as follows. Catalyzes the conversion of urocanate to 4-imidazolone-5-propionate. This chain is Urocanate hydratase, found in Bacillus subtilis (strain 168).